The chain runs to 949 residues: Sensor histidine kinase RcsC (949 aa).

Residues 1 to 19 (MKYLASFRTTLKASRYMFR) lie on the Cytoplasmic side of the membrane. A helical transmembrane segment spans residues 20–41 (ALALVLWLLIAFSSVFYIVNAL). Over 42–313 (HQRESEIRQE…PVDKVLERIR (272 aa)) the chain is Periplasmic. Residues 314-335 (MLILNAILLNVLAGAALFTLAR) traverse the membrane as a helical segment. Over 336 to 949 (MYERRIFIPA…AERVRKSRDS (614 aa)) the chain is Cytoplasmic. A PAS domain is found at 357-425 (QFNRKIVASA…VLTSNNTNLQ (69 aa)). A Histidine kinase domain is found at 476-692 (TVSHELRTPL…QFTVRIPLYG (217 aa)). The residue at position 479 (histidine 479) is a Phosphohistidine; by autocatalysis. The 101-residue stretch at 705-805 (SGKRCWLAVR…ARIYLIEMES (101 aa)) folds into the ABL domain. One can recognise a Response regulatory domain in the interval 826 to 940 (MILVVDDHPI…VIKQTLTLYA (115 aa)). A 4-aspartylphosphate modification is found at aspartate 875.

This sequence belongs to the RcsC family. As to quaternary structure, interacts with RcsD. In terms of processing, autophosphorylated. Activation probably requires a transfer of a phosphate group from a His in the transmitter domain to an Asp in the receiver domain.

It is found in the cell inner membrane. The catalysed reaction is ATP + protein L-histidine = ADP + protein N-phospho-L-histidine.. The Rcs phosphorelay may be activated by RcsF. DjlA, LolA and OmpG might act as a regulator of the phosphorelay. Activity is probably up-regulated by YmgA/AriR, and possibly down-regulated by YcgZ, all 3 are connector proteins providing additional signal input into signaling system. Its function is as follows. Component of the Rcs signaling system, which controls transcription of numerous genes. RcsC functions as a membrane-associated protein kinase that phosphorylates RcsD in response to environmental signals. The phosphoryl group is then transferred to the response regulator RcsB. RcsC also has phosphatase activity. The system controls expression of genes involved in colanic acid capsule synthesis, biofilm formation and cell division. The chain is Sensor histidine kinase RcsC from Escherichia coli (strain K12).